The chain runs to 362 residues: Protein-glutamate methylesterase/protein-glutamine glutaminase (362 aa).

Residues 10–127 form the Response regulatory domain; that stretch reads RVLVVDDSAF…SLNMHVARDE (118 aa). 4-aspartylphosphate is present on Asp-61. One can recognise a CheB-type methylesterase domain in the interval 173-362; that stretch reads RLPRRLVLIG…DAITRAVGEG (190 aa). Active-site residues include Ser-184, His-211, and Asp-304.

It belongs to the CheB family. Phosphorylated by CheA. Phosphorylation of the N-terminal regulatory domain activates the methylesterase activity.

Its subcellular location is the cytoplasm. The enzyme catalyses [protein]-L-glutamate 5-O-methyl ester + H2O = L-glutamyl-[protein] + methanol + H(+). It catalyses the reaction L-glutaminyl-[protein] + H2O = L-glutamyl-[protein] + NH4(+). Involved in chemotaxis. Part of a chemotaxis signal transduction system that modulates chemotaxis in response to various stimuli. Catalyzes the demethylation of specific methylglutamate residues introduced into the chemoreceptors (methyl-accepting chemotaxis proteins or MCP) by CheR. Also mediates the irreversible deamidation of specific glutamine residues to glutamic acid. In Symbiobacterium thermophilum (strain DSM 24528 / JCM 14929 / IAM 14863 / T), this protein is Protein-glutamate methylesterase/protein-glutamine glutaminase.